Here is a 293-residue protein sequence, read N- to C-terminus: 4-hydroxy-tetrahydrodipicolinate synthase (293 aa).

Residue threonine 47 participates in pyruvate binding. The active-site Proton donor/acceptor is the tyrosine 136. Lysine 164 (schiff-base intermediate with substrate) is an active-site residue. Isoleucine 206 contacts pyruvate.

It belongs to the DapA family. In terms of assembly, homotetramer; dimer of dimers.

It is found in the cytoplasm. It carries out the reaction L-aspartate 4-semialdehyde + pyruvate = (2S,4S)-4-hydroxy-2,3,4,5-tetrahydrodipicolinate + H2O + H(+). It participates in amino-acid biosynthesis; L-lysine biosynthesis via DAP pathway; (S)-tetrahydrodipicolinate from L-aspartate: step 3/4. In terms of biological role, catalyzes the condensation of (S)-aspartate-beta-semialdehyde [(S)-ASA] and pyruvate to 4-hydroxy-tetrahydrodipicolinate (HTPA). The protein is 4-hydroxy-tetrahydrodipicolinate synthase of Listeria monocytogenes serotype 4a (strain HCC23).